The chain runs to 495 residues: Glycogen synthase (495 aa).

An ADP-alpha-D-glucose-binding site is contributed by Lys15.

It belongs to the glycosyltransferase 1 family. Bacterial/plant glycogen synthase subfamily.

The catalysed reaction is [(1-&gt;4)-alpha-D-glucosyl](n) + ADP-alpha-D-glucose = [(1-&gt;4)-alpha-D-glucosyl](n+1) + ADP + H(+). It functions in the pathway glycan biosynthesis; glycogen biosynthesis. Its function is as follows. Synthesizes alpha-1,4-glucan chains using ADP-glucose. This is Glycogen synthase from Variovorax paradoxus (strain S110).